We begin with the raw amino-acid sequence, 404 residues long: Lysophospholipid transporter LplT (404 aa).

Helical transmembrane passes span 16-36 (MIAVLCAQFFSAFGDNALLFA), 53-73 (ILQMAFVATYIVLAPFVGQFA), 91-111 (AGALVICFGFNPFLGYSLVGV), 139-159 (MMEASTIAAILLGSVAGGVLA), 164-184 (GVALGVCALVYAIAVVANMFI), 195-213 (SWRPRAMTGSFFTACLVLW), 227-247 (LFWGAGVTLRFLLVLWVPIAL), 253-273 (ATPTLLNAMVAIGIVVGAGAA), 285-305 (CLPAGVLIGVAVAIFALQHSM), 310-330 (LLLIIIGILGGFFVVPLNALL), 350-370 (GENTAMLLMLGLFSVVVKLGV), and 372-392 (VIAVGVGFGVIFALAIALLWG).

This sequence belongs to the major facilitator superfamily. LplT (TC 2.A.1.42) family.

The protein localises to the cell inner membrane. Functionally, catalyzes the facilitated diffusion of 2-acyl-glycero-3-phosphoethanolamine (2-acyl-GPE) into the cell. This chain is Lysophospholipid transporter LplT, found in Yersinia enterocolitica serotype O:8 / biotype 1B (strain NCTC 13174 / 8081).